Consider the following 490-residue polypeptide: Betaine aldehyde dehydrogenase (490 aa).

Residue Asp-93 participates in K(+) binding. 150 to 152 (GAW) is a binding site for NAD(+). Lys-162 functions as the Charge relay system in the catalytic mechanism. 176-179 (KPSE) lines the NAD(+) pocket. Val-180 is a binding site for K(+). 230-233 (GIAS) lines the NAD(+) pocket. Residue Leu-246 coordinates K(+). The Proton acceptor role is filled by Glu-252. Residues Gly-254, Cys-286, and Glu-387 each contribute to the NAD(+) site. The active-site Nucleophile is the Cys-286. Cysteine sulfenic acid (-SOH) is present on Cys-286. K(+)-binding residues include Lys-457 and Gly-460. The active-site Charge relay system is the Glu-464.

It belongs to the aldehyde dehydrogenase family. Dimer of dimers. K(+) serves as cofactor.

It catalyses the reaction betaine aldehyde + NAD(+) + H2O = glycine betaine + NADH + 2 H(+). The protein operates within amine and polyamine biosynthesis; betaine biosynthesis via choline pathway; betaine from betaine aldehyde: step 1/1. Involved in the biosynthesis of the osmoprotectant glycine betaine. Catalyzes the irreversible oxidation of betaine aldehyde to the corresponding acid. The sequence is that of Betaine aldehyde dehydrogenase from Yersinia pseudotuberculosis serotype O:3 (strain YPIII).